Here is a 100-residue protein sequence, read N- to C-terminus: UPF0473 protein lwe1514 (100 aa).

The protein belongs to the UPF0473 family.

This is UPF0473 protein lwe1514 from Listeria welshimeri serovar 6b (strain ATCC 35897 / DSM 20650 / CCUG 15529 / CIP 8149 / NCTC 11857 / SLCC 5334 / V8).